The primary structure comprises 227 residues: Nodulation protein W (227 aa).

In terms of domain architecture, Response regulatory spans 21 to 135; that stretch reads IVFVVEDDIS…ELLDAVVAAT (115 aa). Asp70 bears the 4-aspartylphosphate mark. An HTH luxR-type domain is found at 151 to 216; the sequence is LKSLFETLSP…DLIRMSETLG (66 aa). Positions 175–194 form a DNA-binding region, H-T-H motif; the sequence is NKQVAAELGLAEITVKIYRG.

Phosphorylated by NodV.

The protein resides in the cytoplasm. In terms of biological role, member of the two-component regulatory system NodV/NodW probably involved in the regulation of the transcription of genes involved in the nodulation process. The polypeptide is Nodulation protein W (nodW) (Bradyrhizobium diazoefficiens (strain JCM 10833 / BCRC 13528 / IAM 13628 / NBRC 14792 / USDA 110)).